The primary structure comprises 829 residues: MKRSRVPSTSEDSDNGSNSTSWSQHSNSKHRKQSGKRPSEVFRTDLITAMKLHDSHQLNPEDYYELADPWRQEWEKGVQVPVSPESIPQCAVRTVAEKSTAPLFIKPKKLIRSSESSMLGYVGIQTLADGMCRYDLNEEDVAWLQITNEEFSKMGMQPLDELTMERVMEEFERRCYDNMSHAMETEEGLGIEYDEDVVCDVCQSPDGEDGNEMVFCDKCNICVHQACYGILKVPEGSWLCRTCALGIFPKCHLCPKKGGAMKPTRSGTKWVHVSCALWIPEVSIGNPEKMEPITNVSHIPSNRWALICCLCKEKTGACIQCSAKSCRVAFHVTCGLHCGLKMNTILTEADEVKFKSFCPKHSGLDWNEEEGDDDRPVKVPTREDRSRNRGIDFSASSQTRLSQNPEETRLSERKLRVQQLEDEFYRFVAADEVAEHLQLPLEMVDILFQYWKLKRKVNFNQPLIMPKKEEEDSLARREQEVLLRRLRLFTHLRQDLERVRNLTYMVSRRERIKRTLCRVQEQIFHHHVRLLEQGRVTGVSSTRRLEEAMFYFRTTPPVPASPQPLKGHCGQNSTLSSSEKGSNSYRSSKHIEADKPAKMLMDGVPSSGDSVRSETVMSASSRRSEGRTRSGESHRKEEESERPLEDRRRKSKLWDQVSIKDKLRHAKSMEDTLSSETELDTMDDRLLLSHTNANSVATAPNMYSGSPRKTNASHQGKLVPNGTSGRHLKNWGSFRIPKRSERTSAGRQTERQEADNTADQNSSLKTFSTSPSSPQIRTRLRTGSENRRHLEESDLGQSEQGKRCHTQRLPSPMTRRYGSDVIQRGVLAS.

Positions 1–10 (MKRSRVPSTS) are enriched in polar residues. Residues 1 to 40 (MKRSRVPSTSEDSDNGSNSTSWSQHSNSKHRKQSGKRPSE) form a disordered region. A compositionally biased stretch (low complexity) spans 15–26 (NGSNSTSWSQHS). The segment at 196–246 (DVVCDVCQSPDGEDGNEMVFCDKCNICVHQACYGILKVPEGSWLCRTCALG) adopts a PHD-type 1 zinc-finger fold. The segment at 248-282 (FPKCHLCPKKGGAMKPTRSGTKWVHVSCALWIPEV) adopts a C2HC pre-PHD-type zinc-finger fold. Residues 306 to 362 (LICCLCKEKTGACIQCSAKSCRVAFHVTCGLHCGLKMNTILTEADEVKFKSFCPKHS) form a PHD-type 2 zinc finger. Disordered stretches follow at residues 368–408 (EEEG…PEET), 556–651 (PPVP…RRKS), and 697–829 (ATAP…VLAS). Over residues 374 to 390 (DRPVKVPTREDRSRNRG) the composition is skewed to basic and acidic residues. 3 stretches are compositionally biased toward polar residues: residues 394–405 (SASSQTRLSQNP), 570–586 (GQNSTLSSSEKGSNSYR), and 607–619 (SGDSVRSETVMSA). Basic and acidic residues predominate over residues 622 to 648 (RRSEGRTRSGESHRKEEESERPLEDRR). The segment covering 697-714 (ATAPNMYSGSPRKTNASH) has biased composition (polar residues). Basic and acidic residues predominate over residues 738–754 (KRSERTSAGRQTERQEA). Over residues 762–774 (SSLKTFSTSPSSP) the composition is skewed to low complexity. The segment covering 782-792 (TGSENRRHLEE) has biased composition (basic and acidic residues).

Belongs to the JADE family. In terms of assembly, component of the HBO1 complex composed.

It localises to the nucleus. The protein resides in the chromosome. The protein localises to the cytoplasm. It is found in the cytoskeleton. Its subcellular location is the cilium basal body. In terms of biological role, scaffold subunit of some HBO1 complexes, which have a histone H4 acetyltransferase activity. Plays a key role in HBO1 complex by directing KAT7/HBO1 specificity towards histone H4 acetylation (H4K5ac, H4K8ac and H4K12ac), regulating DNA replication initiation, regulating DNA replication initiation. This is Protein Jade-1 (jade1) from Danio rerio (Zebrafish).